The primary structure comprises 465 residues: Ribulose bisphosphate carboxylase large chain (465 aa).

N6,N6,N6-trimethyllysine is present on Lys4. Substrate-binding residues include Asn113 and Thr163. The active-site Proton acceptor is the Lys165. Substrate is bound at residue Lys167. Lys191, Asp193, and Glu194 together coordinate Mg(2+). An N6-carboxylysine modification is found at Lys191. His284 acts as the Proton acceptor in catalysis. Substrate is bound by residues Arg285, His317, and Ser369.

The protein belongs to the RuBisCO large chain family. Type I subfamily. Heterohexadecamer of 8 large chains and 8 small chains; disulfide-linked. The disulfide link is formed within the large subunit homodimers. The cofactor is Mg(2+). In terms of processing, the disulfide bond which can form in the large chain dimeric partners within the hexadecamer appears to be associated with oxidative stress and protein turnover.

The protein resides in the plastid. The protein localises to the chloroplast. It carries out the reaction 2 (2R)-3-phosphoglycerate + 2 H(+) = D-ribulose 1,5-bisphosphate + CO2 + H2O. The enzyme catalyses D-ribulose 1,5-bisphosphate + O2 = 2-phosphoglycolate + (2R)-3-phosphoglycerate + 2 H(+). RuBisCO catalyzes two reactions: the carboxylation of D-ribulose 1,5-bisphosphate, the primary event in carbon dioxide fixation, as well as the oxidative fragmentation of the pentose substrate in the photorespiration process. Both reactions occur simultaneously and in competition at the same active site. This Ilex crenata (Japanese holly) protein is Ribulose bisphosphate carboxylase large chain.